Reading from the N-terminus, the 276-residue chain is Putative oxidoreductase SadH (276 aa).

S142 provides a ligand contact to substrate. Y155 serves as the catalytic Proton acceptor.

It belongs to the short-chain dehydrogenases/reductases (SDR) family.

In terms of biological role, required for maintaining the appropriate mycolic acid composition and permeability of the envelope on its exposure to acidic pH. The polypeptide is Putative oxidoreductase SadH (sadH) (Mycobacterium tuberculosis (strain CDC 1551 / Oshkosh)).